A 542-amino-acid chain; its full sequence is CTP synthase (542 aa).

The segment at methionine 1–isoleucine 265 is amidoligase domain. A CTP-binding site is contributed by serine 13. Serine 13 is a UTP binding site. Residues serine 14–isoleucine 19 and aspartate 71 each bind ATP. 2 residues coordinate Mg(2+): aspartate 71 and glutamate 139. CTP-binding positions include aspartate 146–glutamate 148, lysine 186–glutamine 191, and lysine 222. UTP is bound by residues lysine 186–glutamine 191 and lysine 222. The region spanning threonine 291–leucine 541 is the Glutamine amidotransferase type-1 domain. Residue glycine 353 coordinates L-glutamine. Cysteine 380 functions as the Nucleophile; for glutamine hydrolysis in the catalytic mechanism. L-glutamine-binding positions include phenylalanine 381–glutamine 384, glutamate 404, and arginine 469. Active-site residues include histidine 514 and glutamate 516.

It belongs to the CTP synthase family. Homotetramer.

It carries out the reaction UTP + L-glutamine + ATP + H2O = CTP + L-glutamate + ADP + phosphate + 2 H(+). The enzyme catalyses L-glutamine + H2O = L-glutamate + NH4(+). The catalysed reaction is UTP + NH4(+) + ATP = CTP + ADP + phosphate + 2 H(+). It participates in pyrimidine metabolism; CTP biosynthesis via de novo pathway; CTP from UDP: step 2/2. Allosterically activated by GTP, when glutamine is the substrate; GTP has no effect on the reaction when ammonia is the substrate. The allosteric effector GTP functions by stabilizing the protein conformation that binds the tetrahedral intermediate(s) formed during glutamine hydrolysis. Inhibited by the product CTP, via allosteric rather than competitive inhibition. Functionally, catalyzes the ATP-dependent amination of UTP to CTP with either L-glutamine or ammonia as the source of nitrogen. Regulates intracellular CTP levels through interactions with the four ribonucleotide triphosphates. The sequence is that of CTP synthase from Agrobacterium fabrum (strain C58 / ATCC 33970) (Agrobacterium tumefaciens (strain C58)).